The chain runs to 140 residues: L-fucose mutarotase (140 aa).

Histidine 22 (proton donor) is an active-site residue. Residues aspartate 30, arginine 107, and 129-131 (YGN) contribute to the substrate site.

Belongs to the RbsD / FucU family. FucU mutarotase subfamily. In terms of assembly, homodecamer.

The protein localises to the cytoplasm. The catalysed reaction is alpha-L-fucose = beta-L-fucose. It functions in the pathway carbohydrate metabolism; L-fucose metabolism. Functionally, involved in the anomeric conversion of L-fucose. In Klebsiella pneumoniae subsp. pneumoniae (strain ATCC 700721 / MGH 78578), this protein is L-fucose mutarotase.